The chain runs to 460 residues: Chromosomal replication initiator protein DnaA (460 aa).

Residues 1–84 (MAVSLWQQCI…RFDIGSRPSA (84 aa)) are domain I, interacts with DnaA modulators. Positions 84–123 (AKKPEPAPVAAVRVPNPQTKASVGTSFNTTEPVANANHRS) are domain II. A domain III, AAA+ region region spans residues 124-340 (NINPTYQFDN…GALNRVIANA (217 aa)). Gly168, Gly170, Lys171, and Thr172 together coordinate ATP. The domain IV, binds dsDNA stretch occupies residues 341 to 460 (NFTGRPITID…YANLIRTLSS (120 aa)).

It belongs to the DnaA family. In terms of assembly, oligomerizes as a right-handed, spiral filament on DNA at oriC.

The protein localises to the cytoplasm. Functionally, plays an essential role in the initiation and regulation of chromosomal replication. ATP-DnaA binds to the origin of replication (oriC) to initiate formation of the DNA replication initiation complex once per cell cycle. Binds the DnaA box (a 9 base pair repeat at the origin) and separates the double-stranded (ds)DNA. Forms a right-handed helical filament on oriC DNA; dsDNA binds to the exterior of the filament while single-stranded (ss)DNA is stabiized in the filament's interior. The ATP-DnaA-oriC complex binds and stabilizes one strand of the AT-rich DNA unwinding element (DUE), permitting loading of DNA polymerase. After initiation quickly degrades to an ADP-DnaA complex that is not apt for DNA replication. Binds acidic phospholipids. The sequence is that of Chromosomal replication initiator protein DnaA from Shewanella sp. (strain ANA-3).